The primary structure comprises 148 residues: 3-dehydroquinate dehydratase (148 aa).

Tyr26 (proton acceptor) is an active-site residue. Substrate-binding residues include Asn77, His83, and Asp90. His103 (proton donor) is an active-site residue. Residues 104-105 and Arg114 contribute to the substrate site; that span reads LS.

Belongs to the type-II 3-dehydroquinase family. Homododecamer.

The catalysed reaction is 3-dehydroquinate = 3-dehydroshikimate + H2O. It participates in metabolic intermediate biosynthesis; chorismate biosynthesis; chorismate from D-erythrose 4-phosphate and phosphoenolpyruvate: step 3/7. In terms of biological role, catalyzes a trans-dehydration via an enolate intermediate. This Chlorobaculum tepidum (strain ATCC 49652 / DSM 12025 / NBRC 103806 / TLS) (Chlorobium tepidum) protein is 3-dehydroquinate dehydratase.